A 552-amino-acid chain; its full sequence is Non-structural protein NS1 (552 aa).

The protein belongs to the orbivirus non-structural protein NS1 family.

This Antilocapra americana (Pronghorn) protein is Non-structural protein NS1 (Segment-5).